The primary structure comprises 328 residues: N-acetyl-gamma-glutamyl-phosphate reductase (328 aa).

C143 is a catalytic residue.

It belongs to the NAGSA dehydrogenase family. Type 1 subfamily.

The protein resides in the cytoplasm. The enzyme catalyses N-acetyl-L-glutamate 5-semialdehyde + phosphate + NADP(+) = N-acetyl-L-glutamyl 5-phosphate + NADPH + H(+). The protein operates within amino-acid biosynthesis; L-arginine biosynthesis; N(2)-acetyl-L-ornithine from L-glutamate: step 3/4. Functionally, catalyzes the NADPH-dependent reduction of N-acetyl-5-glutamyl phosphate to yield N-acetyl-L-glutamate 5-semialdehyde. The polypeptide is N-acetyl-gamma-glutamyl-phosphate reductase (Methanoregula boonei (strain DSM 21154 / JCM 14090 / 6A8)).